Reading from the N-terminus, the 162-residue chain is NADH-quinone oxidoreductase subunit I (162 aa).

4Fe-4S ferredoxin-type domains follow at residues 52-82 (LRRY…IEAG) and 93-122 (VRYD…EGPN). Residues C62, C65, C68, C72, C102, C105, C108, and C112 each coordinate [4Fe-4S] cluster.

This sequence belongs to the complex I 23 kDa subunit family. NDH-1 is composed of 14 different subunits. Subunits NuoA, H, J, K, L, M, N constitute the membrane sector of the complex. The cofactor is [4Fe-4S] cluster.

The protein localises to the cell inner membrane. It carries out the reaction a quinone + NADH + 5 H(+)(in) = a quinol + NAD(+) + 4 H(+)(out). Functionally, NDH-1 shuttles electrons from NADH, via FMN and iron-sulfur (Fe-S) centers, to quinones in the respiratory chain. The immediate electron acceptor for the enzyme in this species is believed to be ubiquinone. Couples the redox reaction to proton translocation (for every two electrons transferred, four hydrogen ions are translocated across the cytoplasmic membrane), and thus conserves the redox energy in a proton gradient. This chain is NADH-quinone oxidoreductase subunit I, found in Bradyrhizobium sp. (strain ORS 278).